Here is a 669-residue protein sequence, read N- to C-terminus: JmjC domain-containing histone demethylation protein 1 (669 aa).

Positions 1 to 61 are disordered; it reads MTAVAASSRV…RRKKPRTELV (61 aa). 2 stretches are compositionally biased toward polar residues: residues 16-27 and 36-49; these read ASSSAHPRTLRS and HDSS…QSKQ. The PHD-type zinc-finger motif lies at 65–126; sequence ELDCAACPAV…KWYCQPCITR (62 aa). 2 disordered regions span residues 131 to 150 and 220 to 256; these read FESG…RPPR and PPDR…QATH. The segment covering 246-255 has biased composition (basic residues); that stretch reads KPARAKKQAT. One can recognise a JmjC domain in the interval 332–494; it reads VTGTPMQAYV…TQWKLVEIEE (163 aa). Positions 390 and 392 each coordinate Fe cation. Residue lysine 407 coordinates substrate. Residue histidine 462 coordinates Fe cation.

It belongs to the JHDM1 histone demethylase family. Fe(2+) is required as a cofactor.

It localises to the nucleus. It catalyses the reaction N(6),N(6)-dimethyl-L-lysyl(36)-[histone H3] + 2 2-oxoglutarate + 2 O2 = L-lysyl(36)-[histone H3] + 2 formaldehyde + 2 succinate + 2 CO2. Histone demethylase that specifically demethylates 'Lys-36' of histone H3, thereby playing a central role in histone code. This chain is JmjC domain-containing histone demethylation protein 1 (JHD1), found in Mycosarcoma maydis (Corn smut fungus).